Reading from the N-terminus, the 403-residue chain is Shaggy-related protein kinase GSK4 (403 aa).

In terms of domain architecture, Protein kinase spans 71–355 (YMAERVVGTG…ALEACAHSFF (285 aa)). ATP contacts are provided by residues 77 to 85 (VGTGSFGVV) and lysine 100. Aspartate 196 serves as the catalytic Proton acceptor.

The protein belongs to the protein kinase superfamily. CMGC Ser/Thr protein kinase family. GSK-3 subfamily. In terms of assembly, interacts with LIC.

The enzyme catalyses L-seryl-[protein] + ATP = O-phospho-L-seryl-[protein] + ADP + H(+). The catalysed reaction is L-threonyl-[protein] + ATP = O-phospho-L-threonyl-[protein] + ADP + H(+). Its function is as follows. Probable serine-threonine kinase that may regulate brassinosteroid signaling. In Oryza sativa subsp. japonica (Rice), this protein is Shaggy-related protein kinase GSK4.